The following is a 530-amino-acid chain: C2H2-type transcription factor MSN2 (530 aa).

2 consecutive C2H2-type zinc fingers follow at residues 409–437 and 438–465; these read FVCD…QEKP and FECN…SGGA.

It localises to the nucleus. The protein localises to the cytoplasm. Functionally, transcription factor that acts as a key downstream transcription factor in the HOG1-MAPK pathway. Plays crucial roles in the regulation of dimorphism transition, aggravated pigmentation, conidiation, microsclerotia formation and subsequent virulence towards Spodoptera litura larvae. More specifically regulates the expression of genes involved in antioxidation, pigment biosynthesis and ion transport and storage. The chain is C2H2-type transcription factor MSN2 from Metarhizium rileyi (strain RCEF 4871) (Nomuraea rileyi).